The following is a 440-amino-acid chain: Xylose isomerase (440 aa).

Residues H101 and D104 contribute to the active site. Mg(2+)-binding residues include E232, E268, H271, D296, D307, D309, and D339.

The protein belongs to the xylose isomerase family. As to quaternary structure, homotetramer. Mg(2+) is required as a cofactor.

Its subcellular location is the cytoplasm. It catalyses the reaction alpha-D-xylose = alpha-D-xylulofuranose. This Escherichia fergusonii (strain ATCC 35469 / DSM 13698 / CCUG 18766 / IAM 14443 / JCM 21226 / LMG 7866 / NBRC 102419 / NCTC 12128 / CDC 0568-73) protein is Xylose isomerase.